Consider the following 398-residue polypeptide: Serine/threonine-protein phosphatase 2A activator (398 aa).

Positions 137, 142, and 143 each coordinate ATP. Mg(2+)-binding residues include Gly197 and Asp203. Residues Pro293, Gln296, and His297 each contribute to the ATP site. The segment covering 343–352 (PVATAPPPPA) has biased composition (pro residues). Residues 343 to 398 (PVATAPPPPAESLSIEQNVGDSSSESSDNSVVLRPSTSSSSLVAAAEGSGDKPSKE) form a disordered region. Low complexity predominate over residues 363 to 388 (DSSSESSDNSVVLRPSTSSSSLVAAA).

It belongs to the PTPA-type PPIase family. As to quaternary structure, associates with PP2A heterodimeric core enzyme PP2A(D), composed of a catalytic subunit (subunit C) and a constant regulatory subunit (PR65 or subunit A). Interacts with the catalytic subunit Pp4-19C of the serine/threonine-protein phosphatase 4 (PP4) complex; thereby mediating basal localization of the Miranda (Mira) complex; probably by facilitating the dephosphorylation of Mira.

Its subcellular location is the cytoplasm. It localises to the nucleus. It catalyses the reaction [protein]-peptidylproline (omega=180) = [protein]-peptidylproline (omega=0). In terms of biological role, PPIases accelerate the folding of proteins. It catalyzes the cis-trans isomerization of proline imidic peptide bonds in oligopeptides. Acts as a regulatory subunit for serine/threonine-protein phosphatase 2A (PP2A). Modulates PP2A activity or substrate specificity, probably by inducing a conformational change in the catalytic subunit, a proposed direct target of the PPIase. Acts as mediator for the basal localization of the Miranda (Mira) complex during mitosis of larval neuroblast asymmetric division. Associates with the phosphatase 4 (PP4) complex to mediate basal localization of Mira; probably by facilitating the dephosphorylation of Mira. Cortical association of Mira mediated by the PTPA-PP4 complex seems to be independent of aPKC activity. This chain is Serine/threonine-protein phosphatase 2A activator, found in Drosophila melanogaster (Fruit fly).